Here is a 425-residue protein sequence, read N- to C-terminus: Proteinase-activated receptor 1 (425 aa).

An N-terminal signal peptide occupies residues 1–21 (MGPRRLLLVAACFSLCGPLLS). Residues 22 to 41 (ARTRARRPESKATNATLDPR) constitute a propeptide that is removed on maturation. N-linked (GlcNAc...) asparagine glycans are attached at residues asparagine 35, asparagine 62, and asparagine 75. Topologically, residues 42 to 102 (SFLLRNPNDK…SGYLTSSWLT (61 aa)) are extracellular. The helical transmembrane segment at 103-128 (LFVPSVYTGVFVVSLPLNIMAIVVFI) threads the bilayer. The Cytoplasmic segment spans residues 129–137 (LKMKVKKPA). The chain crosses the membrane as a helical span at residues 138-157 (VVYMLHLATADVLFVSVLPF). Residues 158–176 (KISYYFSGSDWQFGSELCR) lie on the Extracellular side of the membrane. A disulfide bridge connects residues cysteine 175 and cysteine 254. Residues 177–198 (FVTAAFYCNMYASILLMTVISI) form a helical membrane-spanning segment. At 199-218 (DRFLAVVYPMQSLSWRTLGR) the chain is on the cytoplasmic side. The helical transmembrane segment at 219–239 (ASFTCLAIWALAIAGVVPLLL) threads the bilayer. Over 240–268 (KEQTIQVPGLNITTCHDVLNETLLEGYYA) the chain is Extracellular. Residues asparagine 250 and asparagine 259 are each glycosylated (N-linked (GlcNAc...) asparagine). A helical membrane pass occupies residues 269 to 288 (YYFSAFSAVFFFVPLIISTV). The Cytoplasmic portion of the chain corresponds to 289 to 311 (CYVSIIRCLSSSAVANRSKKSRA). Residues 312–334 (LFLSAAVFCIFIICFGPTNVLLI) traverse the membrane as a helical segment. Residues 335-350 (AHYSFLSHTSTTEAAY) are Extracellular-facing. The helical transmembrane segment at 351-374 (FAYLLCVCVSSISCCIDPLIYYYA) threads the bilayer. The Cytoplasmic portion of the chain corresponds to 375–425 (SSECQRYVYSILCCKESSDPSSYNSSGQLMASKMDTCSSNLNNSIYKKLLT). Serine 418 carries the phosphoserine modification.

It belongs to the G-protein coupled receptor 1 family. Proteolytic cleavage by thrombin generates a new N-terminus that functions as a tethered ligand. Also proteolytically cleaved by cathepsin CTSG. Cleavage at 41-Arg-|-Ser-42 by CTSG results in receptor activation while cleavage at 55-Phe-|-Trp-56 results in inhibition of receptor activation. Post-translationally, phosphorylated in the C-terminal tail; probably mediating desensitization prior to the uncoupling and internalization of the receptor. Platelets and vascular endothelial cells.

Its subcellular location is the cell membrane. In terms of biological role, high affinity receptor that binds the activated thrombin, leading to calcium release from intracellular stores. The thrombin-activated receptor signaling pathway is mediated through PTX-insensitive G proteins, activation of phospholipase C resulting in the production of 1D-myo-inositol 1,4,5-trisphosphate (InsP3) which binds to InsP3 receptors causing calcium release from the stores. In astrocytes, the calcium released into the cytosol allows the Ca(2+)-dependent release of L-glutamate into the synaptic cleft through BEST1, that targets the neuronal postsynaptic GRIN2A/NMDAR receptor resulting in the synaptic plasticity regulation. May play a role in platelets activation and in vascular development. Mediates up-regulation of pro-inflammatory cytokines, such as MCP-1/CCL2 and IL6, triggered by coagulation factor Xa (F10) in cardiac fibroblasts and umbilical vein endothelial cells. The chain is Proteinase-activated receptor 1 from Homo sapiens (Human).